We begin with the raw amino-acid sequence, 122 residues long: Large ribosomal subunit protein uL14c (122 aa).

Belongs to the universal ribosomal protein uL14 family. Part of the 50S ribosomal subunit.

Its subcellular location is the plastid. It is found in the chloroplast. In terms of biological role, binds to 23S rRNA. This Morus indica (Mulberry) protein is Large ribosomal subunit protein uL14c.